A 131-amino-acid polypeptide reads, in one-letter code: Small ribosomal subunit protein uS8 (131 aa).

It belongs to the universal ribosomal protein uS8 family. In terms of assembly, part of the 30S ribosomal subunit. Contacts proteins S5 and S12.

One of the primary rRNA binding proteins, it binds directly to 16S rRNA central domain where it helps coordinate assembly of the platform of the 30S subunit. The chain is Small ribosomal subunit protein uS8 from Dechloromonas aromatica (strain RCB).